The sequence spans 432 residues: Enolase (432 aa).

Glutamine 163 contributes to the (2R)-2-phosphoglycerate binding site. The active-site Proton donor is the glutamate 205. Residues aspartate 242, glutamate 285, and aspartate 312 each contribute to the Mg(2+) site. (2R)-2-phosphoglycerate-binding residues include lysine 337, arginine 366, serine 367, and lysine 388. The active-site Proton acceptor is lysine 337.

It belongs to the enolase family. Mg(2+) is required as a cofactor.

The protein resides in the cytoplasm. It localises to the secreted. The protein localises to the cell surface. The enzyme catalyses (2R)-2-phosphoglycerate = phosphoenolpyruvate + H2O. It functions in the pathway carbohydrate degradation; glycolysis; pyruvate from D-glyceraldehyde 3-phosphate: step 4/5. Catalyzes the reversible conversion of 2-phosphoglycerate (2-PG) into phosphoenolpyruvate (PEP). It is essential for the degradation of carbohydrates via glycolysis. This chain is Enolase, found in Bifidobacterium adolescentis (strain ATCC 15703 / DSM 20083 / NCTC 11814 / E194a).